Reading from the N-terminus, the 83-residue chain is Small ribosomal subunit protein bS16 (83 aa).

The protein belongs to the bacterial ribosomal protein bS16 family.

This chain is Small ribosomal subunit protein bS16, found in Aromatoleum aromaticum (strain DSM 19018 / LMG 30748 / EbN1) (Azoarcus sp. (strain EbN1)).